Here is a 303-residue protein sequence, read N- to C-terminus: Methionyl-tRNA formyltransferase (303 aa).

A (6S)-5,6,7,8-tetrahydrofolate-binding site is contributed by 108–111 (SDLP).

The protein belongs to the Fmt family.

The enzyme catalyses L-methionyl-tRNA(fMet) + (6R)-10-formyltetrahydrofolate = N-formyl-L-methionyl-tRNA(fMet) + (6S)-5,6,7,8-tetrahydrofolate + H(+). Functionally, attaches a formyl group to the free amino group of methionyl-tRNA(fMet). The formyl group appears to play a dual role in the initiator identity of N-formylmethionyl-tRNA by promoting its recognition by IF2 and preventing the misappropriation of this tRNA by the elongation apparatus. This is Methionyl-tRNA formyltransferase from Rickettsia africae (strain ESF-5).